Consider the following 188-residue polypeptide: Elongation factor P (188 aa).

Belongs to the elongation factor P family.

It is found in the cytoplasm. It participates in protein biosynthesis; polypeptide chain elongation. In terms of biological role, involved in peptide bond synthesis. Stimulates efficient translation and peptide-bond synthesis on native or reconstituted 70S ribosomes in vitro. Probably functions indirectly by altering the affinity of the ribosome for aminoacyl-tRNA, thus increasing their reactivity as acceptors for peptidyl transferase. The polypeptide is Elongation factor P (Anaplasma marginale (strain St. Maries)).